The sequence spans 1050 residues: Beta-galactosidase (1050 aa).

N100 and D199 together coordinate substrate. D199 contributes to the Na(+) binding site. Positions 422, 424, and 467 each coordinate Mg(2+). Substrate is bound by residues E467 and 543–546 (EYAH). Residue E467 is the Proton donor of the active site. Residue E543 is the Nucleophile of the active site. N603 is a Mg(2+) binding site. F607 and N610 together coordinate Na(+). Residues N610 and W1025 each contribute to the substrate site.

It belongs to the glycosyl hydrolase 2 family. In terms of assembly, homotetramer. The cofactor is Mg(2+). It depends on Na(+) as a cofactor.

It catalyses the reaction Hydrolysis of terminal non-reducing beta-D-galactose residues in beta-D-galactosides.. This Yersinia pestis bv. Antiqua (strain Angola) protein is Beta-galactosidase.